Consider the following 390-residue polypeptide: Ammonium/H(+) antiporter subunit AmhT (390 aa).

The next 10 helical transmembrane spans lie at 2-22, 31-51, 52-72, 94-114, 143-163, 178-198, 212-232, 266-286, 288-308, and 351-371; these read VIPELFSAGLILLLLFITGFV, VVIFILLGIAVGGLLSGSHLL, HFAGEVGIVLLFFMLGMEFPL, FGVTMAICMMMGLDVITSLII, FMLGLLIFEDLVAPILVAVLV, LLVVKVVALVAGAVILGVFLF, DLFILFVIGLALMYGGLALYL, LLLPLFFLYFGTTISFSEGIP, IPLLILVLVWSVIAKVIVGVL, and VFILASAMIGILLFQFAPSIA.

Belongs to the monovalent cation:proton antiporter 2 (CPA2) transporter (TC 2.A.37) family. Interacts with AmhM.

It is found in the cell membrane. With respect to regulation, amhT alone exhibits antiport activity, but interaction with AmhM confers different properties, such as higher KM for potassium. Functionally, ammonium/proton antiporter that mediates the efflux of ammonium ions. Can also transport potassium or rubidium, but not sodium or lithium. In Alkalihalophilus pseudofirmus (strain ATCC BAA-2126 / JCM 17055 / OF4) (Bacillus pseudofirmus), this protein is Ammonium/H(+) antiporter subunit AmhT (amhT).